The primary structure comprises 398 residues: F-box/kelch-repeat protein At1g30090 (398 aa).

The F-box domain maps to 51 to 98; it reads EPLIPGLPDDVALNCLLRVPVQSHVSSKSVCKRWHLLFGTKETFFAKR. 5 Kelch repeats span residues 106–152, 159–207, 209–255, 257–304, and 305–346; these read PWLF…FRSV, TMFV…VIDG, IYAA…VLNG, LLVT…IYDR, and LFIV…AVNC.

This is F-box/kelch-repeat protein At1g30090 from Arabidopsis thaliana (Mouse-ear cress).